The sequence spans 494 residues: WD repeat-containing protein 37 (494 aa).

Polar residues-rich tracts occupy residues 1-13 (MPTESASCSTARQ) and 22-31 (SLSIRRTNSS). The segment at 1 to 50 (MPTESASCSTARQTKQKRKSHSLSIRRTNSSEQERTGLPRDMLEGQDSKL) is disordered. Basic and acidic residues predominate over residues 32 to 47 (EQERTGLPRDMLEGQD). WD repeat units lie at residues 154-194 (GHRD…CLVK) and 197-236 (GHVGSVNSIKFHPSEQLALTASGDQTAHIWRYAVQLPTPQ). The segment at 237–265 (PVADTSISGEDEVECSDKDEPDLDGDVSS) is disordered. Residues 245 to 263 (GEDEVECSDKDEPDLDGDV) are compositionally biased toward acidic residues. WD repeat units follow at residues 279–318 (SHQGVVIASDWLVGGKQAVTASWDRTANLYDVETSELVHS), 321–360 (GHDQELTHCCTHPTQRLVVTSSRDTTFRLWDFRDPSIHSV), 365–403 (GHTDTVTSAVFTVGDNVVSGSDDRTVKVWDLKNMRSPIA), 406–445 (RTDSAINRINVCVGQKIIALPHDNRQVRLFDMSGVRLARL), and 452–493 (GHRR…LLQE).

Forms homodimers. Interacts with PACS1. Interacts with PACS2.

It is found in the cytoplasm. The protein resides in the nucleus. Functionally, required for normal ER Ca2+ handling in lymphocytes. Together with PACS1, it plays an essential role in stabilizing peripheral lymphocyte populations. The chain is WD repeat-containing protein 37 (WDR37) from Homo sapiens (Human).